Consider the following 190-residue polypeptide: B3 domain-containing protein At1g49475 (190 aa).

The interval 1–27 (MRNMHTNRRSPGPITSAATQRRLKPEP) is disordered. A DNA-binding region (TF-B3) is located at residues 33-125 (KFIKIILLSR…CFRVVIFDVS (93 aa)).

The protein resides in the nucleus. This Arabidopsis thaliana (Mouse-ear cress) protein is B3 domain-containing protein At1g49475.